Reading from the N-terminus, the 448-residue chain is Vicilin Cor a 11.0101 (448 aa).

Residues 1-44 (MLPKEDPELKKCKHKCRDERQFDEQQRRDGKQICEEKARERQQE) are compositionally biased toward basic and acidic residues. The disordered stretch occupies residues 1–66 (MLPKEDPELK…QEENPYVFQD (66 aa)). Asn-47 carries an N-linked (GlcNAc...) asparagine glycan. Cupin type-1 domains are found at residues 84–220 (ENFT…EQLE) and 263–418 (INLL…REVE). Residue Asn-301 is glycosylated (N-linked (GlcNAc...) asparagine). The Cu cation site is built by Cys-333, His-335, and His-362.

It belongs to the 7S seed storage protein family. In terms of assembly, homotrimer. Homohexamer. Post-translationally, N-glycosylated at Asn-301 mostly with xylosylated paucimannosidic-type N-glycan MMX (an N-linked glycan with beta-1,2-xylose residue in the structure) and also with MMXF (a complex N-linked glycan with alpha-1,3-fucose and beta-1,2-xylose residues in the structure). A mixture of proteolytically processed and unprocessed subunits exist. As to expression, expressed in seed (at protein level). Expressed in seed.

In terms of biological role, seed storage protein. Does not have superoxide dismutase (SOD) activity. This chain is Vicilin Cor a 11.0101, found in Corylus avellana (European hazel).